We begin with the raw amino-acid sequence, 445 residues long: Phosphoglucosamine mutase (445 aa).

The active-site Phosphoserine intermediate is Ser-102. Ser-102, Asp-241, Asp-243, and Asp-245 together coordinate Mg(2+). Ser-102 is subject to Phosphoserine.

This sequence belongs to the phosphohexose mutase family. Requires Mg(2+) as cofactor. In terms of processing, activated by phosphorylation.

The enzyme catalyses alpha-D-glucosamine 1-phosphate = D-glucosamine 6-phosphate. Its function is as follows. Catalyzes the conversion of glucosamine-6-phosphate to glucosamine-1-phosphate. The polypeptide is Phosphoglucosamine mutase (Acinetobacter baumannii (strain SDF)).